The sequence spans 1603 residues: Vitellogenin-5 (1603 aa).

The signal sequence occupies residues M1–A15. Positions F24–V685 constitute a Vitellogenin domain. The VWFD domain maps to A1306–E1475. Intrachain disulfides connect C1308–C1438 and C1330–C1474. The interval N1492–K1513 is disordered.

In terms of processing, vitellogenin 5 undergoes little if any processing before being packaged into yolk platelets. Expressed in the intestine of adult hermaphrodites.

Its subcellular location is the secreted. In terms of biological role, precursor of the egg-yolk proteins that are sources of nutrients during embryonic development. Together with other vitellogenins, may play a role in modulating life-span, acting via induction of autophagy and lysosomal lipolysis. The chain is Vitellogenin-5 (vit-5) from Caenorhabditis elegans.